The chain runs to 285 residues: Pantothenate synthetase (285 aa).

ATP is bound at residue 30–37 (MGYLHAGH). Histidine 37 acts as the Proton donor in catalysis. Glutamine 61 provides a ligand contact to (R)-pantoate. Glutamine 61 is a beta-alanine binding site. 147-150 (GQKD) is an ATP binding site. Glutamine 153 provides a ligand contact to (R)-pantoate. ATP contacts are provided by residues valine 176 and 184–187 (LSSR).

The protein belongs to the pantothenate synthetase family. In terms of assembly, homodimer.

It is found in the cytoplasm. The catalysed reaction is (R)-pantoate + beta-alanine + ATP = (R)-pantothenate + AMP + diphosphate + H(+). The protein operates within cofactor biosynthesis; (R)-pantothenate biosynthesis; (R)-pantothenate from (R)-pantoate and beta-alanine: step 1/1. Its function is as follows. Catalyzes the condensation of pantoate with beta-alanine in an ATP-dependent reaction via a pantoyl-adenylate intermediate. The chain is Pantothenate synthetase from Solidesulfovibrio magneticus (strain ATCC 700980 / DSM 13731 / RS-1) (Desulfovibrio magneticus).